The chain runs to 487 residues: Bifunctional protein GlmU (487 aa).

The interval 1-235 (MSHSPTPLAA…PEEASGVNDR (235 aa)) is pyrophosphorylase. UDP-N-acetyl-alpha-D-glucosamine is bound by residues 13-16 (LAAG), Lys-27, Gln-82, 87-88 (GT), 110-112 (SGD), Gly-147, Glu-162, Asn-177, and Asn-233. Asp-112 is a Mg(2+) binding site. Asn-233 contributes to the Mg(2+) binding site. The interval 236-256 (EELARAGRVLLRRRASELMRS) is linker. The segment at 257–487 (GVTIEDPERF…ADSPRGGRAS (231 aa)) is N-acetyltransferase. The UDP-N-acetyl-alpha-D-glucosamine site is built by Arg-339 and Lys-357. His-369 functions as the Proton acceptor in the catalytic mechanism. UDP-N-acetyl-alpha-D-glucosamine contacts are provided by Tyr-372 and Asn-383. Acetyl-CoA contacts are provided by residues Ala-386, 392 to 393 (NY), Ser-411, Ala-429, and Arg-446. The interval 453–487 (EGWVARRKAEAQNKGAAEAAPAPSPADSPRGGRAS) is disordered. Positions 468–481 (AAEAAPAPSPADSP) are enriched in low complexity.

This sequence in the N-terminal section; belongs to the N-acetylglucosamine-1-phosphate uridyltransferase family. In the C-terminal section; belongs to the transferase hexapeptide repeat family. Homotrimer. Mg(2+) is required as a cofactor.

The protein resides in the cytoplasm. It carries out the reaction alpha-D-glucosamine 1-phosphate + acetyl-CoA = N-acetyl-alpha-D-glucosamine 1-phosphate + CoA + H(+). It catalyses the reaction N-acetyl-alpha-D-glucosamine 1-phosphate + UTP + H(+) = UDP-N-acetyl-alpha-D-glucosamine + diphosphate. The protein operates within nucleotide-sugar biosynthesis; UDP-N-acetyl-alpha-D-glucosamine biosynthesis; N-acetyl-alpha-D-glucosamine 1-phosphate from alpha-D-glucosamine 6-phosphate (route II): step 2/2. Its pathway is nucleotide-sugar biosynthesis; UDP-N-acetyl-alpha-D-glucosamine biosynthesis; UDP-N-acetyl-alpha-D-glucosamine from N-acetyl-alpha-D-glucosamine 1-phosphate: step 1/1. It participates in bacterial outer membrane biogenesis; LPS lipid A biosynthesis. Functionally, catalyzes the last two sequential reactions in the de novo biosynthetic pathway for UDP-N-acetylglucosamine (UDP-GlcNAc). The C-terminal domain catalyzes the transfer of acetyl group from acetyl coenzyme A to glucosamine-1-phosphate (GlcN-1-P) to produce N-acetylglucosamine-1-phosphate (GlcNAc-1-P), which is converted into UDP-GlcNAc by the transfer of uridine 5-monophosphate (from uridine 5-triphosphate), a reaction catalyzed by the N-terminal domain. The sequence is that of Bifunctional protein GlmU from Anaeromyxobacter sp. (strain Fw109-5).